Consider the following 108-residue polypeptide: UPF0235 protein RPB_0109 (108 aa).

Belongs to the UPF0235 family.

This Rhodopseudomonas palustris (strain HaA2) protein is UPF0235 protein RPB_0109.